The sequence spans 213 residues: MSLNLADIRLEYSKKELSPEDCLPDAVAQFEIWLNEAIAAQVPEPTAMNLAAIGADGRPSSRIVLLKGVEDGQLLFYTNYQSRKGQALEANPYVALNFFWPELERQVRIEGKAARVAPEVSDAYFASRPYTSRLGAWASEQSREIASKATLVTRAAMFGARYPINVPRPPHWGGFAVVPDRVEFWQGRPSRLHDRVLYTLQPDGGWSRSRLAP.

Substrate is bound by residues 9–12 (RLEY) and lysine 67. FMN-binding positions include 62 to 67 (RIVLLK), 77 to 78 (YT), arginine 83, lysine 84, and glutamine 106. 3 residues coordinate substrate: tyrosine 124, arginine 128, and serine 132. Residues 141–142 (QS) and tryptophan 185 each bind FMN. 191–193 (RLH) contacts substrate. Arginine 195 provides a ligand contact to FMN.

This sequence belongs to the pyridoxamine 5'-phosphate oxidase family. In terms of assembly, homodimer. Requires FMN as cofactor.

It catalyses the reaction pyridoxamine 5'-phosphate + O2 + H2O = pyridoxal 5'-phosphate + H2O2 + NH4(+). The catalysed reaction is pyridoxine 5'-phosphate + O2 = pyridoxal 5'-phosphate + H2O2. Its pathway is cofactor metabolism; pyridoxal 5'-phosphate salvage; pyridoxal 5'-phosphate from pyridoxamine 5'-phosphate: step 1/1. The protein operates within cofactor metabolism; pyridoxal 5'-phosphate salvage; pyridoxal 5'-phosphate from pyridoxine 5'-phosphate: step 1/1. Functionally, catalyzes the oxidation of either pyridoxine 5'-phosphate (PNP) or pyridoxamine 5'-phosphate (PMP) into pyridoxal 5'-phosphate (PLP). This chain is Pyridoxine/pyridoxamine 5'-phosphate oxidase, found in Chromobacterium violaceum (strain ATCC 12472 / DSM 30191 / JCM 1249 / CCUG 213 / NBRC 12614 / NCIMB 9131 / NCTC 9757 / MK).